Here is an 85-residue protein sequence, read N- to C-terminus: Alpha-insect toxin Bot14 (85 aa).

Residues 1–18 form the signal peptide; the sequence is MSSLMISTAMKGKAPYRQ. The LCN-type CS-alpha/beta domain maps to 20–84; the sequence is RDGYIAQPHN…GIIVHGEKCH (65 aa). Cystine bridges form between C30/C83, C34/C55, C41/C65, and C45/C67.

The protein belongs to the long (4 C-C) scorpion toxin superfamily. Sodium channel inhibitor family. Alpha subfamily. Expressed by the venom gland.

The protein localises to the secreted. Its function is as follows. Alpha toxins bind voltage-independently at site-3 of sodium channels (Nav) and inhibit the inactivation of the activated channels, thereby blocking neuronal transmission. This toxin is active only on insects. The protein is Alpha-insect toxin Bot14 of Buthus occitanus tunetanus (Common European scorpion).